We begin with the raw amino-acid sequence, 302 residues long: uncharacterized protein (302 aa).

Positions 1–22 (MLVVFKRLGFIVSIFSLTFLSA) are cleaved as a signal peptide. The N-palmitoyl cysteine moiety is linked to residue cysteine 23. Cysteine 23 carries S-diacylglycerol cysteine lipidation.

This sequence belongs to the MG067/MG068/MG395 family.

The protein resides in the cell membrane. This is an uncharacterized protein from Mycoplasma pneumoniae (strain ATCC 29342 / M129 / Subtype 1) (Mycoplasmoides pneumoniae).